Here is a 294-residue protein sequence, read N- to C-terminus: 4-diphosphocytidyl-2-C-methyl-D-erythritol kinase (294 aa).

Residue K19 is part of the active site. 106-116 (PVASGIGGGSA) provides a ligand contact to ATP. D148 is a catalytic residue.

Belongs to the GHMP kinase family. IspE subfamily.

It catalyses the reaction 4-CDP-2-C-methyl-D-erythritol + ATP = 4-CDP-2-C-methyl-D-erythritol 2-phosphate + ADP + H(+). It functions in the pathway isoprenoid biosynthesis; isopentenyl diphosphate biosynthesis via DXP pathway; isopentenyl diphosphate from 1-deoxy-D-xylulose 5-phosphate: step 3/6. Its function is as follows. Catalyzes the phosphorylation of the position 2 hydroxy group of 4-diphosphocytidyl-2C-methyl-D-erythritol. In Rhizobium etli (strain ATCC 51251 / DSM 11541 / JCM 21823 / NBRC 15573 / CFN 42), this protein is 4-diphosphocytidyl-2-C-methyl-D-erythritol kinase.